Here is a 924-residue protein sequence, read N- to C-terminus: Mediator of RNA polymerase II transcription subunit 16 (924 aa).

The protein belongs to the Mediator complex subunit 16 family. In terms of assembly, component of the Mediator complex.

It is found in the nucleus. Functionally, component of the Mediator complex, a coactivator involved in the regulated transcription of nearly all RNA polymerase II-dependent genes. Mediator functions as a bridge to convey information from gene-specific regulatory proteins to the basal RNA polymerase II transcription machinery. Mediator is recruited to promoters by direct interactions with regulatory proteins and serves as a scaffold for the assembly of a functional preinitiation complex with RNA polymerase II and the general transcription factors. This Yarrowia lipolytica (strain CLIB 122 / E 150) (Yeast) protein is Mediator of RNA polymerase II transcription subunit 16 (SIN4).